Reading from the N-terminus, the 644-residue chain is Threonine--tRNA ligase (644 aa).

Residues 1–61 enclose the TGS domain; the sequence is MNVSIEGQML…DGTTTIEPVY (61 aa). A catalytic region spans residues 241–532; that stretch reads DHRKLGQQLD…LIEQYAGAFP (292 aa). Cys-333, His-384, and His-509 together coordinate Zn(2+).

Belongs to the class-II aminoacyl-tRNA synthetase family. Homodimer. It depends on Zn(2+) as a cofactor.

The protein resides in the cytoplasm. The enzyme catalyses tRNA(Thr) + L-threonine + ATP = L-threonyl-tRNA(Thr) + AMP + diphosphate + H(+). Functionally, catalyzes the attachment of threonine to tRNA(Thr) in a two-step reaction: L-threonine is first activated by ATP to form Thr-AMP and then transferred to the acceptor end of tRNA(Thr). Also edits incorrectly charged L-seryl-tRNA(Thr). The chain is Threonine--tRNA ligase from Nitratidesulfovibrio vulgaris (strain ATCC 29579 / DSM 644 / CCUG 34227 / NCIMB 8303 / VKM B-1760 / Hildenborough) (Desulfovibrio vulgaris).